A 120-amino-acid chain; its full sequence is uncharacterized protein (120 aa).

The next 2 helical transmembrane spans lie at 26–46 and 57–77; these read PSTS…PAGM and LLFA…LTLV.

The protein localises to the membrane. This is an uncharacterized protein from Saccharomyces cerevisiae (strain ATCC 204508 / S288c) (Baker's yeast).